We begin with the raw amino-acid sequence, 322 residues long: 1-aminocyclopropane-1-carboxylate oxidase 1 (322 aa).

Residues 159–259 (PTFGTKVSSY…RMSIASFYNP (101 aa)) enclose the Fe2OG dioxygenase domain. Fe cation-binding residues include His-183, Asp-185, and His-240.

This sequence belongs to the iron/ascorbate-dependent oxidoreductase family. The cofactor is Fe cation.

The catalysed reaction is 1-aminocyclopropane-1-carboxylate + L-ascorbate + O2 = ethene + L-dehydroascorbate + hydrogen cyanide + CO2 + 2 H2O. The protein operates within alkene biosynthesis; ethylene biosynthesis via S-adenosyl-L-methionine; ethylene from S-adenosyl-L-methionine: step 2/2. This Oryza sativa subsp. japonica (Rice) protein is 1-aminocyclopropane-1-carboxylate oxidase 1 (ACO1).